The following is a 66-amino-acid chain: Large ribosomal subunit protein bL35 (66 aa).

Over residues 1-16 (MPKQKTHRASAKRFKR) the composition is skewed to basic residues. The segment at 1-21 (MPKQKTHRASAKRFKRTGSGG) is disordered.

The protein belongs to the bacterial ribosomal protein bL35 family.

The chain is Large ribosomal subunit protein bL35 from Streptococcus pneumoniae serotype 2 (strain D39 / NCTC 7466).